Here is a 451-residue protein sequence, read N- to C-terminus: Aminodeoxychorismate synthase component 1 (451 aa).

L-tryptophan contacts are provided by residues Ser-34, 41–44 (HNRF), and 238–240 (PFS). Catalysis depends on Glu-256, which acts as the Proton donor. Lys-272 functions as the N6-(4-deoxychorismate)-lysine intermediate in the catalytic mechanism.

It belongs to the anthranilate synthase component I family. In terms of assembly, monomer. Heterodimer consisting of two non-identical subunits: a glutamine amidotransferase subunit (PabA) and a aminodeoxychorismate synthase subunit (PabB). Requires Mg(2+) as cofactor.

It catalyses the reaction chorismate + L-glutamine = 4-amino-4-deoxychorismate + L-glutamate. Its pathway is cofactor biosynthesis; tetrahydrofolate biosynthesis; 4-aminobenzoate from chorismate: step 1/2. In terms of biological role, part of a heterodimeric complex that catalyzes the two-step biosynthesis of 4-amino-4-deoxychorismate (ADC), a precursor of p-aminobenzoate (PABA) and tetrahydrofolate. In the first step, a glutamine amidotransferase (PabA) generates ammonia as a substrate that, along with chorismate, is used in the second step, catalyzed by aminodeoxychorismate synthase (PabB) to produce ADC. The chain is Aminodeoxychorismate synthase component 1 (pabB) from Klebsiella aerogenes (Enterobacter aerogenes).